The following is a 406-amino-acid chain: 2-epi-valiolone synthase (406 aa).

The segment at 1 to 21 (MPSTGSTPILAHDVKSPHRGS) is disordered. Residues 105-108 (EPSK), 137-141 (GVLCD), 161-162 (TS), lysine 174, lysine 183, and 201-204 (CLAT) contribute to the NAD(+) site. Residues glutamate 216, histidine 287, and histidine 304 each coordinate Zn(2+).

Belongs to the sugar phosphate cyclases superfamily. EVS family. NAD(+) is required as a cofactor. Requires Co(2+) as cofactor. The cofactor is Zn(2+).

It catalyses the reaction D-sedoheptulose 7-phosphate = 2-epi-valiolone + phosphate. Catalyzes the conversion of sedoheptulose 7-phosphate to 2-epi-valiolone, which may serve as an alternative precursor for aminocyclitol biosynthesis. This chain is 2-epi-valiolone synthase, found in Stigmatella aurantiaca (strain DW4/3-1).